The primary structure comprises 268 residues: Hydroxyethylthiazole kinase (268 aa).

Met45 serves as a coordination point for substrate. ATP-binding residues include Arg121 and Thr167. Substrate is bound at residue Gly194.

Belongs to the Thz kinase family. Mg(2+) serves as cofactor.

It catalyses the reaction 5-(2-hydroxyethyl)-4-methylthiazole + ATP = 4-methyl-5-(2-phosphooxyethyl)-thiazole + ADP + H(+). It participates in cofactor biosynthesis; thiamine diphosphate biosynthesis; 4-methyl-5-(2-phosphoethyl)-thiazole from 5-(2-hydroxyethyl)-4-methylthiazole: step 1/1. Its function is as follows. Catalyzes the phosphorylation of the hydroxyl group of 4-methyl-5-beta-hydroxyethylthiazole (THZ). The chain is Hydroxyethylthiazole kinase from Bacillus anthracis (strain A0248).